A 107-amino-acid polypeptide reads, in one-letter code: Putative double-stranded DNA mimic protein PC1_1990 (107 aa).

Belongs to the putative dsDNA mimic protein family.

May act as a double-stranded DNA (dsDNA) mimic. Probably regulates the activity of a dsDNA-binding protein. The sequence is that of Putative double-stranded DNA mimic protein PC1_1990 from Pectobacterium carotovorum subsp. carotovorum (strain PC1).